The sequence spans 466 residues: MKNSGSIQESTSSTGISVLIVLALGFLMATLDVTVVNVAMADMKNTLSMSLSGVTWVVDGYILTFASLLLAGGALADRFGSKTIYILGLAVFVMASCLCAASINGQMLIAGRLIQGIGAALFMPSSLSLLAASYLDERARARMFGLWAALVSAASALGPFIGGVLVQLAGWQSIFLINVPIGAAALISAYRILSRVPGKSSRVNIIGHLLGMMALGFLSYALIQGPSAGWRSPVILVAFTAAVLAFVLFLLREISAKTPILPASLYKNGRFSAAQFIGFLLNFALFGGMFMLSLFLQEAGGASSFMAGVELLPMMAVFVIGNLLFARLANRFEAGQLMFVSMAVSCIIALLLFVLISPDFPYWQLAVLMSVMNLCTGITVPAMTTVIMQAAGQRHTNIAGAALNANRQIGALVGVAITGVIIHLSATWYAGAGFAFLMMGAAYSLAALLVWLFLAAHNGTAASEKM.

14 helical membrane-spanning segments follow: residues 16–36 (ISVL…VTVV), 56–76 (WVVD…GALA), 83–103 (TIYI…AASI), 113–133 (LIQG…LAAS), 146–166 (LWAA…GVLV), 168–188 (LAGW…ALIS), 203–223 (VNII…YALI), 234–254 (VILV…LREI), 276–296 (FIGF…SLFL), 305–325 (FMAG…NLLF), 337–357 (LMFV…VLIS), 367–387 (VLMS…TTVI), 409–429 (IGAL…ATWY), and 434–454 (FAFL…WLFL).

The protein belongs to the major facilitator superfamily. EmrB family.

The protein resides in the cell membrane. Functionally, resistance to the epoxide antibiotic methylenomycin. This chain is Methylenomycin A resistance protein (mmr), found in Bacillus subtilis (strain 168).